A 626-amino-acid polypeptide reads, in one-letter code: Grainyhead-like protein 3 homolog (626 aa).

Residues 30-95 (EAWKTYLENP…QGKRYYHGME (66 aa)) are transcription activation. One can recognise a Grh/CP2 DB domain in the interval 226 to 460 (SLKSDFEYTL…DLETPPVLFI (235 aa)).

The protein belongs to the grh/CP2 family. Grainyhead subfamily. Homodimer, also forms heterodimers with GRHL1 and GRHL2. Interacts with LMO4. In terms of tissue distribution, expressed in brain, colon, pancreas, placenta and kidney. Isoform 1 is expressed in lung and tonsil. Isoform 2 is prostate-specific.

It localises to the nucleus. Its function is as follows. Transcription factor playing important roles in primary neurulation and in the differentiation of stratified epithelia of both ectodermal and endodermal origin. Binds directly to the consensus DNA sequence 5'-AACCGGTT-3' acting as an activator and repressor on distinct target genes. xhibits functional redundancy with GRHL2 in epidermal morphogenetic events and epidermal wound repair. Exhibits functional redundancy with GRHL2 in epidermal morphogenetic events and epidermal wound repair but is essential to form the epidermal barrier with TGM3 as critical direct target gene among others. Despite being dispensable during normal epidermal homeostasis in the adulthood, is again required for barrier repair after immune-mediated epidermal damage, regulates distinct gene batteries in embryonic epidermal differentiation and adult epidermal barrier reformation after injury. Plays unique and cooperative roles with GRHL2 in establishing distinct zones of primary neurulation. Essential for spinal closure, functions cooperatively with GRHL2 in closure 2 (forebrain/midbrain boundary) and posterior neuropore closure. Also required for proper development of the oral periderm. No genetic interaction with GRHL3, no functional cooperativity due to diverse target gene selectivity. The polypeptide is Grainyhead-like protein 3 homolog (Homo sapiens (Human)).